A 722-amino-acid chain; its full sequence is DUF724 domain-containing protein 7 (722 aa).

Residues 424 to 449 form a disordered region; that stretch reads KTTPKKKLQAMKNQKSSTNDSVGEKV. Residues 434–444 are compositionally biased toward polar residues; sequence MKNQKSSTNDS. Positions 540–720 constitute a DUF724 domain; it reads VLPFVKKSQL…HEFQAILAAP (181 aa). A coiled-coil region spans residues 645 to 712; sequence CALEELKAVE…DQEVQNVDHE (68 aa).

As to quaternary structure, homodimer. Interacts wtih ABAP1, ARIA and LHP1. Interacts with the non-modified histones H1, H2B, H3 and H4. In terms of tissue distribution, expressed in roots, leaves, stems and flowers.

The protein localises to the nucleus. Functionally, may act as a link between DNA replication, transcription and chromatin remodeling during flower development. May participate in the repression of LHP1-targeted genes during flower development by direct interaction with LHP1. May be involved in the polar growth of plant cells via transportation of RNAs. In Arabidopsis thaliana (Mouse-ear cress), this protein is DUF724 domain-containing protein 7.